A 522-amino-acid polypeptide reads, in one-letter code: Probable protein kinase UbiB (522 aa).

Residues 119-496 enclose the Protein kinase domain; sequence SFDADPVASA…QRRTNRLLLT (378 aa). ATP contacts are provided by residues 125 to 133 and Lys-147; that span reads VASASIAQV. The Proton acceptor role is filled by Asp-282. The helical transmembrane segment at 494-514 threads the bilayer; sequence LLTVFYLIGGFVAGGLFAHWI.

This sequence belongs to the ABC1 family. UbiB subfamily.

It is found in the cell inner membrane. Its pathway is cofactor biosynthesis; ubiquinone biosynthesis [regulation]. In terms of biological role, is probably a protein kinase regulator of UbiI activity which is involved in aerobic coenzyme Q (ubiquinone) biosynthesis. The protein is Probable protein kinase UbiB of Leptothrix cholodnii (strain ATCC 51168 / LMG 8142 / SP-6) (Leptothrix discophora (strain SP-6)).